We begin with the raw amino-acid sequence, 333 residues long: GTPase Obg (333 aa).

An Obg domain is found at 1–159 (MKFIDEATIT…ATVRLELKLL (159 aa)). Residues 63–85 (KQFAAPNGAPGEGRQKTGKSGDD) are disordered. Residues 75-84 (GRQKTGKSGD) are compositionally biased toward basic and acidic residues. The region spanning 160–329 (ADVGLIGLPN…LKKHLFELLC (170 aa)) is the OBG-type G domain. GTP contacts are provided by residues 166–173 (GLPNAGKS), 191–195 (FTTLS), 213–216 (DIPG), 283–286 (NKMD), and 310–312 (SAA). The Mg(2+) site is built by Ser-173 and Thr-193.

Belongs to the TRAFAC class OBG-HflX-like GTPase superfamily. OBG GTPase family. As to quaternary structure, monomer. Mg(2+) is required as a cofactor.

The protein localises to the cytoplasm. Its function is as follows. An essential GTPase which binds GTP, GDP and possibly (p)ppGpp with moderate affinity, with high nucleotide exchange rates and a fairly low GTP hydrolysis rate. Plays a role in control of the cell cycle, stress response, ribosome biogenesis and in those bacteria that undergo differentiation, in morphogenesis control. This Desulfosudis oleivorans (strain DSM 6200 / JCM 39069 / Hxd3) (Desulfococcus oleovorans) protein is GTPase Obg.